The following is a 368-amino-acid chain: Glutamyl-tRNA reductase (368 aa).

Residues 43–46 (TCHR), S89, 94–96 (EHQ), and Q100 each bind substrate. Residue C44 is the Nucleophile of the active site. NADP(+) is bound at residue 164-169 (GTGMMG).

It belongs to the glutamyl-tRNA reductase family. As to quaternary structure, homodimer.

It carries out the reaction (S)-4-amino-5-oxopentanoate + tRNA(Glu) + NADP(+) = L-glutamyl-tRNA(Glu) + NADPH + H(+). It participates in porphyrin-containing compound metabolism; protoporphyrin-IX biosynthesis; 5-aminolevulinate from L-glutamyl-tRNA(Glu): step 1/2. Functionally, catalyzes the NADPH-dependent reduction of glutamyl-tRNA(Glu) to glutamate 1-semialdehyde (GSA). This chain is Glutamyl-tRNA reductase, found in Thermosipho melanesiensis (strain DSM 12029 / CIP 104789 / BI429).